The primary structure comprises 730 residues: Elongation factor 2 (730 aa).

Residues 19–228 (TKIRNIGIVA…TGVSFKDVYD (210 aa)) form the tr-type G domain. GTP contacts are provided by residues 28-35 (AHIDHGKT), 94-98 (DTPGH), and 148-151 (NKVD). Diphthamide is present on His596.

Belongs to the TRAFAC class translation factor GTPase superfamily. Classic translation factor GTPase family. EF-G/EF-2 subfamily.

Its subcellular location is the cytoplasm. Its function is as follows. Catalyzes the GTP-dependent ribosomal translocation step during translation elongation. During this step, the ribosome changes from the pre-translocational (PRE) to the post-translocational (POST) state as the newly formed A-site-bound peptidyl-tRNA and P-site-bound deacylated tRNA move to the P and E sites, respectively. Catalyzes the coordinated movement of the two tRNA molecules, the mRNA and conformational changes in the ribosome. The sequence is that of Elongation factor 2 from Methanosarcina barkeri (strain Fusaro / DSM 804).